The chain runs to 90 residues: uncharacterized protein (90 aa).

Transmembrane regions (helical) follow at residues Ile-17–Val-37 and Ile-55–Ala-75.

It is found in the membrane. This is an uncharacterized protein from Schizosaccharomyces pombe (strain 972 / ATCC 24843) (Fission yeast).